The primary structure comprises 1264 residues: Box A-binding factor (1264 aa).

A compositionally biased stretch (basic and acidic residues) spans 1 to 11 (MTKTTKPKEKA). 6 disordered regions span residues 1–25 (MTKTTKPKEKAAAGGAVIGSGSGLG), 161–200 (TASDTAATSEAAIDDDPSAINTNNNNNNSKAQNDASESVK), 234–253 (LISHHQQEQHQQAQQQQHQQ), 405–463 (QLHQ…HALS), 523–585 (NQTQ…SAAT), and 599–627 (HNSSLEDGYGSPRSSHSGGGGGGTLPAFQ). The segment covering 16–25 (AVIGSGSGLG) has biased composition (gly residues). A compositionally biased stretch (low complexity) spans 161–171 (TASDTAATSEA). Residues 189-198 (SKAQNDASES) are compositionally biased toward polar residues. Residues 409–421 (QQHHHQQQLHHHQ) show a composition bias toward basic residues. Low complexity-rich tracts occupy residues 422–438 (QQQQQLYHQQQQQQQQQ), 447–459 (STSSAGGDSPSSS), and 523–554 (NQTQAHLQQQHHQQQQQQHQQHQQQQLQQQQQ). The segment covering 555 to 564 (QHHHNQHQHH) has biased composition (basic residues). Low complexity-rich tracts occupy residues 565 to 585 (NSSSSSPGPAGLHHSSSSAAT) and 599 to 614 (HNSSLEDGYGSPRSSH). The segment at 803-827 (CSNCHTTHTSLWRRNPAGEPVCNAC) adopts a GATA-type zinc-finger fold. Disordered regions lie at residues 841-867 (TMKKDTIQKRKRKPKGTKSEKSKSKSK), 899-1048 (DDMK…SNEN), and 1181-1202 (EEMDQSQQQQQQQQHQQQQHGE). Low complexity-rich tracts occupy residues 909–950 (PYNS…GSTS) and 985–1007 (QMSPLNMQQHQQQQSCSMQHSPS). Polar residues predominate over residues 1008–1023 (TPTSIFNTPSPTHQLH). Composition is skewed to low complexity over residues 1024–1048 (NNNNNNNNSSIFNNNNNNNSSSNEN) and 1185–1200 (QSQQQQQQQQHQQQQH). 2 positions are modified to phosphoserine: S1208 and S1210.

Interacts (via GATA-type Zn-finger domain) with Bfc; this interaction enhances srp binding to the promoter of crq/croquemort.

The protein localises to the nucleus. In terms of biological role, may function as a transcriptional activator protein and may play a key role in the organogenesis of the fat body. Binds a sequence element (5'-[TA]GATAA-3') found in the larval promoters of all known alcohol dehydrogenase (ADH) genes. Acts as a homeotic gene downstream of the terminal gap gene HKB to promote morphogenesis and differentiation of anterior and posterior midgut. Together with transcriptional cofactor Bfc directly binds the promoter of phagocytic receptor crq/croquemort to upregulate its expression and stimulate efferocytosis in response to apoptotic cells, including during embryogenesis. The chain is Box A-binding factor (srp) from Drosophila melanogaster (Fruit fly).